We begin with the raw amino-acid sequence, 274 residues long: Protein bax (274 aa).

Polar residues predominate over residues Thr-32 to Leu-64. Residues Thr-32 to Thr-74 are disordered. An ATP-binding site is contributed by Gly-247 to Ser-254.

This chain is Protein bax (bax), found in Escherichia coli (strain K12).